The chain runs to 458 residues: UDP-N-acetylmuramoylalanine--D-glutamate ligase (458 aa).

Residue 124-130 (GSDGKTT) coordinates ATP.

The protein belongs to the MurCDEF family.

The protein localises to the cytoplasm. The catalysed reaction is UDP-N-acetyl-alpha-D-muramoyl-L-alanine + D-glutamate + ATP = UDP-N-acetyl-alpha-D-muramoyl-L-alanyl-D-glutamate + ADP + phosphate + H(+). The protein operates within cell wall biogenesis; peptidoglycan biosynthesis. Functionally, cell wall formation. Catalyzes the addition of glutamate to the nucleotide precursor UDP-N-acetylmuramoyl-L-alanine (UMA). The chain is UDP-N-acetylmuramoylalanine--D-glutamate ligase from Clostridium tetani (strain Massachusetts / E88).